The following is a 569-amino-acid chain: Anti-Muellerian hormone type-2 receptor (569 aa).

Positions 1-17 (MLGTLGLWALLPAAVQA) are cleaved as a signal peptide. The Extracellular segment spans residues 18–148 (PPNRRTCVFF…AAPGESPWMA (131 aa)). 2 disulfides stabilise this stretch: cysteine 55-cysteine 79 and cysteine 92-cysteine 109. Residue asparagine 66 is glycosylated (N-linked (GlcNAc...) asparagine). The N-linked (GlcNAc...) asparagine glycan is linked to asparagine 119. The chain crosses the membrane as a helical span at residues 149-169 (LALLGLVLLLLLLLGGIVVAL). Residues 170-569 (LQRKAYRVQS…PGAACASSDV (400 aa)) are Cytoplasmic-facing. One can recognise a Protein kinase domain in the interval 201-511 (LCFSQVIREG…RLVALVHPQE (311 aa)). ATP contacts are provided by residues 207–215 (IREGGHAAV) and lysine 228. The active-site Proton acceptor is aspartate 331. The disordered stretch occupies residues 512-535 (AQPCPEGRPHSHPEDWPPAPAPAP).

It belongs to the protein kinase superfamily. TKL Ser/Thr protein kinase family. TGFB receptor subfamily. Interacts with type I receptor ACVR1. It depends on Mg(2+) as a cofactor. Mn(2+) is required as a cofactor.

Its subcellular location is the membrane. The catalysed reaction is L-threonyl-[receptor-protein] + ATP = O-phospho-L-threonyl-[receptor-protein] + ADP + H(+). It carries out the reaction L-seryl-[receptor-protein] + ATP = O-phospho-L-seryl-[receptor-protein] + ADP + H(+). On ligand binding, forms a receptor complex consisting of two type II and two type I transmembrane serine/threonine kinases. Type II receptors phosphorylate and activate type I receptors which autophosphorylate, then bind and activate SMAD transcriptional regulators. Receptor for anti-Muellerian hormone. The sequence is that of Anti-Muellerian hormone type-2 receptor (AMHR2) from Oryctolagus cuniculus (Rabbit).